A 159-amino-acid chain; its full sequence is Pupal cuticle protein Edg-91 (159 aa).

The first 21 residues, 1–21, serve as a signal peptide directing secretion; it reads MALVRVSCMLALLLIAGQGQA.

In terms of tissue distribution, larval (posterior) and imaginal (anterior) epidermis.

Functionally, component of the pupal cuticle. The polypeptide is Pupal cuticle protein Edg-91 (Edg91) (Drosophila melanogaster (Fruit fly)).